The following is a 211-amino-acid chain: MTKGILGRKIGMTQVFAENGDLIPVTVIEATPNVVLQKKTIEKDGYEAIQLGFEDISEKRANKPQIGHAAKANTAPKRFIREIRGANIDEYEVGQEVKVDIFAEGDIVDVTGISKGKGFQGAIKRHGQSRGPMAHGSRYHRRPGSMGAIAPNRVFKSKELPGRMGGQRVTIQNLKIVKVDPERNLLLIKGNVPGPRKGLVIVKSAVKAKAK.

The tract at residues 122–147 (AIKRHGQSRGPMAHGSRYHRRPGSMG) is disordered.

The protein belongs to the universal ribosomal protein uL3 family. As to quaternary structure, part of the 50S ribosomal subunit. Forms a cluster with proteins L14 and L19.

One of the primary rRNA binding proteins, it binds directly near the 3'-end of the 23S rRNA, where it nucleates assembly of the 50S subunit. This is Large ribosomal subunit protein uL3 from Geobacillus sp. (strain WCH70).